The primary structure comprises 105 residues: Met repressor (105 aa).

Belongs to the MetJ family. Homodimer.

The protein localises to the cytoplasm. Functionally, this regulatory protein, when combined with SAM (S-adenosylmethionine) represses the expression of the methionine regulon and of enzymes involved in SAM synthesis. The chain is Met repressor from Haemophilus influenzae (strain PittEE).